Reading from the N-terminus, the 488-residue chain is 3-octaprenyl-4-hydroxybenzoate carboxy-lyase (488 aa).

A Mn(2+)-binding site is contributed by Asn172. Prenylated FMN is bound by residues Ile175 to Arg177, Arg189 to Leu191, and Arg194 to Gly195. Glu238 contacts Mn(2+). Asp287 (proton donor) is an active-site residue.

It belongs to the UbiD family. In terms of assembly, homohexamer. It depends on prenylated FMN as a cofactor. Mn(2+) serves as cofactor.

The protein resides in the cell membrane. It catalyses the reaction a 4-hydroxy-3-(all-trans-polyprenyl)benzoate + H(+) = a 2-(all-trans-polyprenyl)phenol + CO2. It participates in cofactor biosynthesis; ubiquinone biosynthesis. Functionally, catalyzes the decarboxylation of 3-octaprenyl-4-hydroxy benzoate to 2-octaprenylphenol, an intermediate step in ubiquinone biosynthesis. This is 3-octaprenyl-4-hydroxybenzoate carboxy-lyase from Pseudomonas aeruginosa (strain LESB58).